The sequence spans 1586 residues: COP1-interactive protein 1 (1586 aa).

The NAB domain maps to 10-84 (LKSFFEPHFD…RQYDDLTGEI (75 aa)). The segment at 88–119 (VNGKGESSSSSSSDSDSDHSSKRKVKRNGNGK) is disordered. Coiled coils occupy residues 128 to 411 (TGAL…LKES), 437 to 1196 (ASEL…LKEE), 1225 to 1336 (LETL…TEAT), and 1372 to 1406 (MESLRNELEMKGDEIETLMEKISNIEVKLRLSNQK). LRR repeat units lie at residues 173–187 (SEEISSKLKLETEKL), 188–210 (EDEKSIALSDNRELHQKLEVAGK), 216–239 (NQKLEDIKKERDELQTERDNGIKR), 261–285 (TSNLKQQLEASEQRVSELTSGMNSA), and 287–309 (EENKSLSLKVSEISDVIQQGQTT). The span at 249-262 (DWKTTSDQLKDETS) shows a compositional bias: basic and acidic residues. A disordered region spans residues 249-286 (DWKTTSDQLKDETSNLKQQLEASEQRVSELTSGMNSAE). The disordered stretch occupies residues 325 to 353 (KEKESEHSSLVELHKTHERESSSQVKELE). 20 LRR repeats span residues 384–410 (IAELSNEIQEAQNTMQELMSESGQLKE), 437–461 (ASELEAQLESSKQQVSDLSASLKAA), 473–498 (VETMNKLEQTQNTIQELMAELGKLKD), 560–586 (IAELSNEIKEAQNTIQELVSESGQLKE), 613–637 (VSELEAQLESSEQRISDLTVDLKDA), 649–674 (LEIMDKLEQAQNTIKELMDELGELKD), 768–792 (LSELETQLKLLEQRVVDLSASLNAA), 824–850 (LAESKDTLTQKENELSSFVEVHEAHKR), 856–880 (VKELEARVESAEEQVKELNQNLNSS), 902–929 (ESTIQELSSESERLKGSHAEKDNELFSL), 944–968 (LRGLEAQLESSEHRVLELSESLKAA), 990–1014 (QIMVQELTADSSKLKEQLAEKESKL), 1077–1101 (ISELEKTMEERGTELSALTQKLEDN), 1120–1144 (RAELDSMSVQKEEVEKQMVCKSEEA), 1195–1220 (EEIINKVKVHESILEEINGLSEKIKG), 1247–1272 (VQMHDKINVASSEIMALTELINNLKN), 1372–1396 (MESLRNELEMKGDEIETLMEKISNI), 1398–1417 (VKLRLSNQKLRVTEQVLTEK), 1426–1448 (AKHLEEQALLEKNLTMTHETYRG), and 1450–1474 (IKEIADKVNITVDGFQSMSEKLTEK). Residues 430-456 (QRDSSTRASELEAQLESSKQQVSDLSA) are disordered. A compositionally biased stretch (polar residues) spans 444–455 (LESSKQQVSDLS). Residues 965-985 (LKAAEEESRTMSTKISETSDE) form a disordered region. Residues 1496 to 1530 (VIERNHEKEKMNKEIEKKDEEIKKLGGKVREDEKE) are a coiled coil.

Interacts with COP1 coiled-coil region. In terms of tissue distribution, mainly expressed in photosynthetic and vascular tissues. Accumulates in both dark-grown and light-grown seedlings roots and shoots, leaves and flowers (at protein level).

It is found in the cell membrane. The protein localises to the cytoplasm. The protein resides in the cytoskeleton. Its function is as follows. Positive regulator of abscisic acid (ABA)-mediated signaling pathways involved in abiotic stress responses (e.g. osmotic stress) and leading to various plant adaptation (e.g. stomata closure). The protein is COP1-interactive protein 1 of Arabidopsis thaliana (Mouse-ear cress).